A 277-amino-acid chain; its full sequence is Ubiquitin-conjugating enzyme suppressor 1 (277 aa).

The segment at 254–277 (RTLACPDETNDNRGSEHYTKRKKI) is disordered.

In terms of biological role, not known; its elevated expression suppresses the conditional cell cycle defects associated with UBC3/CDC34 mutations. This is Ubiquitin-conjugating enzyme suppressor 1 (UBS1) from Saccharomyces cerevisiae (strain ATCC 204508 / S288c) (Baker's yeast).